A 143-amino-acid polypeptide reads, in one-letter code: Large ribosomal subunit protein uL15 (143 aa).

Residues 1–48 (MRLNTISPSKGAKHSSKRLGRGIGSGLGKTSGRGHKGQKARSGCSIHR) form a disordered region. Positions 11 to 20 (GAKHSSKRLG) are enriched in basic residues. Gly residues predominate over residues 21 to 31 (RGIGSGLGKTS).

Belongs to the universal ribosomal protein uL15 family. As to quaternary structure, part of the 50S ribosomal subunit.

Binds to the 23S rRNA. The polypeptide is Large ribosomal subunit protein uL15 (Baumannia cicadellinicola subsp. Homalodisca coagulata).